The sequence spans 597 residues: Alkyldihydroxyacetonephosphate synthase (597 aa).

Residues 131–313 form the FAD-binding PCMH-type domain; that stretch reads IPRLPDIVVW…SEVTIKIFPI (183 aa). Residues 163 to 169, 232 to 238, 245 to 248, and 297 to 303 each bind FAD; these read PIGGGTS, DSIEFST, TRAS, and EGTLGVV. Residue Arg-444 participates in substrate binding. The Proton donor/acceptor role is filled by Tyr-507. Residues 544–546 form an important for enzyme activity region; sequence HHH. The Microbody targeting signal motif lies at 595 to 597; it reads CKL.

It belongs to the FAD-binding oxidoreductase/transferase type 4 family. Homodimer. FAD is required as a cofactor.

Its subcellular location is the peroxisome. The catalysed reaction is a long chain fatty alcohol + a 1-acylglycerone 3-phosphate = a 1-O-alkylglycerone 3-phosphate + a long-chain fatty acid + H(+). It functions in the pathway glycerolipid metabolism; ether lipid biosynthesis. Functionally, catalyzes the exchange of an acyl for a long-chain alkyl group and the formation of the ether bond in the biosynthesis of ether phospholipids. This chain is Alkyldihydroxyacetonephosphate synthase (ads-1), found in Caenorhabditis elegans.